The sequence spans 323 residues: Mitochondrial glutamate carrier 1 (323 aa).

Solcar repeat units lie at residues 6 to 93, 101 to 214, and 223 to 312; these read ISLP…FRHQ, LTLP…LNQL, and SPFY…GIAE. The next 6 helical transmembrane spans lie at 12-32, 62-82, 107-127, 189-209, 223-243, and 292-312; these read LING…IDLA, YFGM…EKAI, MLAG…MEML, GLGA…PLFA, SPFY…AVAV, and ALVI…GIAE.

Belongs to the mitochondrial carrier (TC 2.A.29) family.

The protein resides in the mitochondrion inner membrane. The catalysed reaction is L-glutamate(in) + H(+)(in) = L-glutamate(out) + H(+)(out). Functionally, mitochondrial glutamate/H(+) symporter. Responsible for the transport of glutamate from the cytosol into the mitochondrial matrix with the concomitant import of a proton. Plays a role in the control of glucose-stimulated insulin secretion. This is Mitochondrial glutamate carrier 1 (Slc25a22) from Mus musculus (Mouse).